Reading from the N-terminus, the 569-residue chain is Urease subunit beta (569 aa).

The Urease domain maps to 131 to 569; it reads GGIDTHIHFI…VSLAQLFSIF (439 aa). Ni(2+)-binding residues include His136, His138, and Lys219. Lys219 is modified (N6-carboxylysine). Substrate is bound at residue His221. Ni(2+) is bound by residues His248 and His274. Residue His322 is the Proton donor of the active site. Residue Asp362 participates in Ni(2+) binding.

It belongs to the metallo-dependent hydrolases superfamily. Urease alpha subunit family. In terms of assembly, heterohexamer of 3 UreA (alpha) and 3 UreB (beta) subunits. The cofactor is Ni cation. Carboxylation allows a single lysine to coordinate two nickel ions.

The protein localises to the cytoplasm. The catalysed reaction is urea + 2 H2O + H(+) = hydrogencarbonate + 2 NH4(+). Its pathway is nitrogen metabolism; urea degradation; CO(2) and NH(3) from urea (urease route): step 1/1. The protein is Urease subunit beta of Helicobacter pylori (strain Shi470).